Consider the following 467-residue polypeptide: Asparagine--tRNA ligase (467 aa).

This sequence belongs to the class-II aminoacyl-tRNA synthetase family. As to quaternary structure, homodimer.

Its subcellular location is the cytoplasm. The enzyme catalyses tRNA(Asn) + L-asparagine + ATP = L-asparaginyl-tRNA(Asn) + AMP + diphosphate + H(+). In Bacteroides fragilis (strain ATCC 25285 / DSM 2151 / CCUG 4856 / JCM 11019 / LMG 10263 / NCTC 9343 / Onslow / VPI 2553 / EN-2), this protein is Asparagine--tRNA ligase.